The primary structure comprises 235 residues: Uridylate kinase (235 aa).

Residue 9-12 (KLSG) coordinates ATP. Gly51 is a UMP binding site. Residues Gly52 and Arg56 each contribute to the ATP site. UMP contacts are provided by residues Asp71 and 133 to 140 (SGNPFFTT). ATP contacts are provided by Thr160, Tyr166, and Asp169.

The protein belongs to the UMP kinase family. Homohexamer.

It is found in the cytoplasm. The enzyme catalyses UMP + ATP = UDP + ADP. The protein operates within pyrimidine metabolism; CTP biosynthesis via de novo pathway; UDP from UMP (UMPK route): step 1/1. Its activity is regulated as follows. Inhibited by UTP. In terms of biological role, catalyzes the reversible phosphorylation of UMP to UDP. The protein is Uridylate kinase of Gloeobacter violaceus (strain ATCC 29082 / PCC 7421).